The chain runs to 675 residues: UvrABC system protein B (675 aa).

The Helicase ATP-binding domain occupies 32–417; that stretch reads EGLSDGLAYQ…EHAGQVVEQV (386 aa). 45–52 contacts ATP; sequence GVTGSGKT. The Beta-hairpin signature appears at 98–121; sequence YYDYYQPEAYVPSRDLFIEKDSAI. The Helicase C-terminal domain maps to 436-602; that stretch reads QVDDLMSEIN…QIKKQVKDII (167 aa). The region spanning 634–669 is the UVR domain; it reads IKEIAKLEKAMQQAARDLQFEEAAVLRDRIRDIKEN.

This sequence belongs to the UvrB family. As to quaternary structure, forms a heterotetramer with UvrA during the search for lesions. Interacts with UvrC in an incision complex.

The protein resides in the cytoplasm. Functionally, the UvrABC repair system catalyzes the recognition and processing of DNA lesions. A damage recognition complex composed of 2 UvrA and 2 UvrB subunits scans DNA for abnormalities. Upon binding of the UvrA(2)B(2) complex to a putative damaged site, the DNA wraps around one UvrB monomer. DNA wrap is dependent on ATP binding by UvrB and probably causes local melting of the DNA helix, facilitating insertion of UvrB beta-hairpin between the DNA strands. Then UvrB probes one DNA strand for the presence of a lesion. If a lesion is found the UvrA subunits dissociate and the UvrB-DNA preincision complex is formed. This complex is subsequently bound by UvrC and the second UvrB is released. If no lesion is found, the DNA wraps around the other UvrB subunit that will check the other stand for damage. The protein is UvrABC system protein B of Neisseria meningitidis serogroup B (strain ATCC BAA-335 / MC58).